Consider the following 277-residue polypeptide: 4-hydroxy-3-methylbut-2-enyl diphosphate reductase (277 aa).

Position 12 (C12) interacts with [4Fe-4S] cluster. 2 residues coordinate (2E)-4-hydroxy-3-methylbut-2-enyl diphosphate: H36 and H70. Positions 36 and 70 each coordinate dimethylallyl diphosphate. 2 residues coordinate isopentenyl diphosphate: H36 and H70. Residue C92 participates in [4Fe-4S] cluster binding. H120 provides a ligand contact to (2E)-4-hydroxy-3-methylbut-2-enyl diphosphate. Dimethylallyl diphosphate is bound at residue H120. An isopentenyl diphosphate-binding site is contributed by H120. E122 serves as the catalytic Proton donor. T158 is a (2E)-4-hydroxy-3-methylbut-2-enyl diphosphate binding site. C186 is a [4Fe-4S] cluster binding site. The (2E)-4-hydroxy-3-methylbut-2-enyl diphosphate site is built by S214, N216, and S258. Positions 214, 216, and 258 each coordinate dimethylallyl diphosphate. Residues S214, N216, and S258 each coordinate isopentenyl diphosphate.

The protein belongs to the IspH family. Requires [4Fe-4S] cluster as cofactor.

It carries out the reaction isopentenyl diphosphate + 2 oxidized [2Fe-2S]-[ferredoxin] + H2O = (2E)-4-hydroxy-3-methylbut-2-enyl diphosphate + 2 reduced [2Fe-2S]-[ferredoxin] + 2 H(+). It catalyses the reaction dimethylallyl diphosphate + 2 oxidized [2Fe-2S]-[ferredoxin] + H2O = (2E)-4-hydroxy-3-methylbut-2-enyl diphosphate + 2 reduced [2Fe-2S]-[ferredoxin] + 2 H(+). The protein operates within isoprenoid biosynthesis; dimethylallyl diphosphate biosynthesis; dimethylallyl diphosphate from (2E)-4-hydroxy-3-methylbutenyl diphosphate: step 1/1. It participates in isoprenoid biosynthesis; isopentenyl diphosphate biosynthesis via DXP pathway; isopentenyl diphosphate from 1-deoxy-D-xylulose 5-phosphate: step 6/6. Catalyzes the conversion of 1-hydroxy-2-methyl-2-(E)-butenyl 4-diphosphate (HMBPP) into a mixture of isopentenyl diphosphate (IPP) and dimethylallyl diphosphate (DMAPP). Acts in the terminal step of the DOXP/MEP pathway for isoprenoid precursor biosynthesis. This chain is 4-hydroxy-3-methylbut-2-enyl diphosphate reductase, found in Campylobacter jejuni subsp. doylei (strain ATCC BAA-1458 / RM4099 / 269.97).